The following is a 268-amino-acid chain: 4-hydroxy-tetrahydrodipicolinate reductase (268 aa).

NAD(+) is bound at residue 8–13; the sequence is GAAGRM. Arg36 contacts NADP(+). NAD(+) contacts are provided by residues 99–101 and 123–126; these read GTT and AANF. The active-site Proton donor/acceptor is the His156. Position 157 (His157) interacts with (S)-2,3,4,5-tetrahydrodipicolinate. Residue Lys160 is the Proton donor of the active site. A (S)-2,3,4,5-tetrahydrodipicolinate-binding site is contributed by 166–167; sequence GT.

It belongs to the DapB family.

The protein localises to the cytoplasm. The catalysed reaction is (S)-2,3,4,5-tetrahydrodipicolinate + NAD(+) + H2O = (2S,4S)-4-hydroxy-2,3,4,5-tetrahydrodipicolinate + NADH + H(+). The enzyme catalyses (S)-2,3,4,5-tetrahydrodipicolinate + NADP(+) + H2O = (2S,4S)-4-hydroxy-2,3,4,5-tetrahydrodipicolinate + NADPH + H(+). The protein operates within amino-acid biosynthesis; L-lysine biosynthesis via DAP pathway; (S)-tetrahydrodipicolinate from L-aspartate: step 4/4. In terms of biological role, catalyzes the conversion of 4-hydroxy-tetrahydrodipicolinate (HTPA) to tetrahydrodipicolinate. The polypeptide is 4-hydroxy-tetrahydrodipicolinate reductase (Pseudomonas fluorescens (strain SBW25)).